The following is a 247-amino-acid chain: 14-3-3 protein gamma-B (247 aa).

Belongs to the 14-3-3 family. As to quaternary structure, homodimer, and heterodimer with other family members.

Its subcellular location is the cytoplasm. In terms of biological role, adapter protein implicated in the regulation of a large spectrum of both general and specialized signaling pathways. Binds to a large number of partners, usually by recognition of a phosphoserine or phosphothreonine motif. Binding generally results in the modulation of the activity of the binding partner. The sequence is that of 14-3-3 protein gamma-B (ywhag-b) from Xenopus laevis (African clawed frog).